The sequence spans 227 residues: AN1-type zinc finger protein 3 (227 aa).

Residues 12-44 (PSLPPRCPCGFWGSSKTMNLCSKCFADFQKKQP) form an A20-type zinc finger. Residues C18, C20, C32, and C35 each contribute to the Zn(2+) site. Disordered regions lie at residues 41-99 (KKQP…TEEC) and 113-151 (PTKR…RSKQ). Low complexity-rich tracts occupy residues 49–59 (TPSTSNSQSDL) and 66–77 (SDNNNTSVTTPT). Polar residues-rich tracts occupy residues 78–96 (LSPS…SPST) and 113–127 (PTKR…SENE). Positions 135–148 (RLVENPERPEESGR) are enriched in basic and acidic residues. The AN1-type zinc-finger motif lies at 151-200 (QKSRRRCFQCQTKLELVQQELGSCRCGYVFCMLHRLPEQHDCTFDHMGRG). Zn(2+) is bound by residues C157, C160, C174, C176, C181, H184, H190, and C192.

As to expression, expressed in testis.

The polypeptide is AN1-type zinc finger protein 3 (Zfand3) (Mus musculus (Mouse)).